A 245-amino-acid chain; its full sequence is Serine/arginine-rich splicing factor 1B (245 aa).

The region spanning 15–90 is the RRM 1 domain; sequence CRIYVGNLPP…YRLRVEFPRS (76 aa). Disordered stretches follow at residues 89 to 116 and 192 to 245; these read RSGR…PPSR and KVDG…RSRT. A compositionally biased stretch (gly residues) spans 91–106; it reads GRGGGRGGGGGGGVGA. Residues 120 to 194 enclose the RRM 2 domain; sequence YRVIVSGLPP…ETAYIRVKVD (75 aa). Positions 204-245 are enriched in basic residues; that stretch reads SRSRSRSRSRSRSNSRSRSYSPRRSRGSPRYSPRHSRSRSRT.

Belongs to the splicing factor SR family.

Its subcellular location is the cytoplasm. The protein localises to the nucleus speckle. In terms of biological role, may play a role in preventing exon skipping, ensuring the accuracy of splicing and regulating alternative splicing. In Danio rerio (Zebrafish), this protein is Serine/arginine-rich splicing factor 1B (srsf1b).